Here is a 263-residue protein sequence, read N- to C-terminus: Phosphonates import ATP-binding protein PhnC 1 (263 aa).

The ABC transporter domain maps to 3 to 248 (IQVENLWVAF…KEKELYFGEK (246 aa)). Position 37-44 (37-44 (GPSGAGKS)) interacts with ATP.

This sequence belongs to the ABC transporter superfamily. Phosphonates importer (TC 3.A.1.9.1) family. As to quaternary structure, the complex is composed of two ATP-binding proteins (PhnC), two transmembrane proteins (PhnE) and a solute-binding protein (PhnD).

The protein localises to the cell inner membrane. It carries out the reaction phosphonate(out) + ATP + H2O = phosphonate(in) + ADP + phosphate + H(+). Part of the ABC transporter complex PhnCDE involved in phosphonates import. Responsible for energy coupling to the transport system. This Synechococcus sp. (strain JA-2-3B'a(2-13)) (Cyanobacteria bacterium Yellowstone B-Prime) protein is Phosphonates import ATP-binding protein PhnC 1.